The sequence spans 431 residues: MAQKIQSVKGMNDLLPVEQKDFKLTAAFWQAFEDTVGRWTRTYGYQQIRTPIVEQTGLFVRSIGEETDVVGKEMYTFSDSNDSLSLSLRPEGTASCLRAVVEHNLLYNSPQKLWYMGPMFRRERPQKGRYRQFHQVGIEALGFEGPDIDAEIIAMSADLWEKLGIREYLTLEINSLGNREERAAHRAALVEYLTRYEDKLDEDSKRRLKTNPLRVLDTKNPDLQEICNAAPRLVDYLGEASQNHYARFKAMLDGLGIQYIENPRLVRGLDYYNQTVFEWTTDKLGAQATVCGGGRYDGLIEELGGKPAPSIGFAMGIERLLFLVSEYGSLEVNAAPDVYAMHQGERADLQVMKYAQALRTQGFNVMQHSGYQSLKAQMKKADNSGARFALIVAQDELANGTVTLKDMNGAHGQQTVAAADLTNTLQQWKNA.

The protein belongs to the class-II aminoacyl-tRNA synthetase family. In terms of assembly, homodimer.

The protein resides in the cytoplasm. It carries out the reaction tRNA(His) + L-histidine + ATP = L-histidyl-tRNA(His) + AMP + diphosphate + H(+). This chain is Histidine--tRNA ligase, found in Neisseria meningitidis serogroup C (strain 053442).